Reading from the N-terminus, the 191-residue chain is Fe/S biogenesis protein NfuA (191 aa).

Positions 149 and 152 each coordinate [4Fe-4S] cluster.

The protein belongs to the NfuA family. As to quaternary structure, homodimer. [4Fe-4S] cluster is required as a cofactor.

Its function is as follows. Involved in iron-sulfur cluster biogenesis. Binds a 4Fe-4S cluster, can transfer this cluster to apoproteins, and thereby intervenes in the maturation of Fe/S proteins. Could also act as a scaffold/chaperone for damaged Fe/S proteins. The protein is Fe/S biogenesis protein NfuA of Erwinia tasmaniensis (strain DSM 17950 / CFBP 7177 / CIP 109463 / NCPPB 4357 / Et1/99).